A 765-amino-acid chain; its full sequence is Endothelin-converting enzyme 2 (765 aa).

At 1 to 60 the chain is on the cytoplasmic side; that stretch reads MSVALQELGGGGNMVEYKRATLRDEDAPETPVEGGASPDAVEAGFRKRTSRLLGLHTQLE. Residues 61–81 traverse the membrane as a helical; Signal-anchor for type II membrane protein segment; the sequence is LVLAGVSLLLAALLLGCLVAL. Residues 82–765 lie on the Lumenal side of the membrane; sequence GVQYHRDPSH…MNSGQLCEVW (684 aa). Residues 93-765 form the Peptidase M13 domain; the sequence is TCLTEACIRV…MNSGQLCEVW (673 aa). Cystine bridges form between C94/C99, C117/C750, C125/C710, C181/C430, and C639/C762. N-linked (GlcNAc...) asparagine glycosylation is found at N161, N165, N206, N266, N311, N378, and N534. H602 is a Zn(2+) binding site. The active site involves E603. A Zn(2+)-binding site is contributed by H606. N627 and N635 each carry an N-linked (GlcNAc...) asparagine glycan. Residue E662 participates in Zn(2+) binding. Catalysis depends on D666, which acts as the Proton donor.

The protein belongs to the peptidase M13 family. Requires Zn(2+) as cofactor. As to expression, isoform ECE2-1 and isoform ECE2-2 are expressed in brain and adrenal gland.

It localises to the golgi apparatus membrane. The protein localises to the cytoplasmic vesicle. It is found in the secretory vesicle membrane. The catalysed reaction is Hydrolysis of the 21-Trp-|-Val-22 bond in big endothelin to form endothelin 1.. In terms of biological role, converts big endothelin-1 to endothelin-1. Also involved in the processing of various neuroendocrine peptides, including neurotensin, angiotensin I, substance P, proenkephalin-derived peptides, and prodynorphin-derived peptides. May play a role in amyloid-beta processing. The chain is Endothelin-converting enzyme 2 from Bos taurus (Bovine).